Here is a 578-residue protein sequence, read N- to C-terminus: Lysine--tRNA ligase (578 aa).

Positions 414 and 421 each coordinate Mg(2+).

Belongs to the class-II aminoacyl-tRNA synthetase family. As to quaternary structure, homodimer. It depends on Mg(2+) as a cofactor.

It is found in the cytoplasm. The enzyme catalyses tRNA(Lys) + L-lysine + ATP = L-lysyl-tRNA(Lys) + AMP + diphosphate. The polypeptide is Lysine--tRNA ligase (Porphyromonas gingivalis (strain ATCC 33277 / DSM 20709 / CIP 103683 / JCM 12257 / NCTC 11834 / 2561)).